The chain runs to 171 residues: Ribosome maturation factor RimP (171 aa).

It belongs to the RimP family.

The protein localises to the cytoplasm. Functionally, required for maturation of 30S ribosomal subunits. This chain is Ribosome maturation factor RimP, found in Anaeromyxobacter dehalogenans (strain 2CP-C).